The chain runs to 244 residues: Claudin-12 (244 aa).

The Cytoplasmic portion of the chain corresponds to 1-10; that stretch reads MGCRDVHAAT. A helical transmembrane segment spans residues 11–31; sequence VLSFLCGIASVAGLFAGTLLP. Over 32–87 the chain is Extracellular; the sequence is NWRKLRLITFNRNEKNLTVYTGLWVKCARYDGSSDCLMYDTTWYSSVDQLDLRVLQ. A helical transmembrane segment spans residues 88–108; sequence FALPLSMLIAMGALLLCLIGM. Topologically, residues 109–135 are cytoplasmic; that stretch reads CNTAFRSSVPNIKLAKCLVNSAGCHLV. The helical transmembrane segment at 136–156 threads the bilayer; it reads AGLLFFLAGTVSLSPSIWVIF. Residues 157–174 are Extracellular-facing; it reads YNIHLNKKFEPVFSFDYA. Residues 175–195 traverse the membrane as a helical segment; that stretch reads VYVTIASAGGLFMTSLILFIW. Over 196 to 244 the chain is Cytoplasmic; that stretch reads YCTCKSLPSPFWQPLYSHPPSMHTYSQPYSARSRLSAIEIDIPVVSHTT. Phosphoserine is present on residues Ser228 and Ser231.

Belongs to the claudin family. In terms of assembly, interacts with OCLN.

The protein resides in the cell junction. Its subcellular location is the tight junction. It is found in the cell membrane. Functionally, plays a major role in tight junction-specific obliteration of the intercellular space, through calcium-independent cell-adhesion activity. The sequence is that of Claudin-12 (CLDN12) from Pongo abelii (Sumatran orangutan).